Reading from the N-terminus, the 645-residue chain is MNVINCEEVKRDEFHTEKYYESYNIFGAHVVTEDEIQGVRFTVWAPHAKAMSVVGDFNEWDYEQHKMLQVTEEGIWSLFIPHIEEGEIYKYAIETLAGDVILKADPYAVYAEVRPNTASVVFDIKGYEWNDKNWNRKKKKKSIYKEAMTVYELHFGSWKKKEDGTLYSYREMVEELIPYVVEHQFTHIEIMPLVEHPYDRSWGYQGTGYYAATSRFGTPHDLMHFVDECHKYGIGVILDWVPGHFCKDAHGLYLFDGTPTYEYKDKDVQENPVWGTVNFDLGKREVRNFLISNALFWMRYFHIDGFRVDAVANMLYWNKEGQEQSNEHAVSFLRELNEAVFAEDEDFLMTAEDSTAWPLVTTPTYEGGLGFNYKWNMGWMNDVLKYMECAPEYRKHIHEKMTFSLLYAYSENFILPLSHDEVVHGKKSLLNKMPGDYWDKFAQLRLLYGYFFTHPGKKLLFMGGEFGQFDEWKDLEDLDWNLHDFEMHRYMHDYFKELIALYKRSKPLWQLDHSPEGFQWIDANNNEQSIFSFIRQGDKQEDALVIVCNFTKATYENYKVGVPDFEYYNEILNSDAQQYGGSGQVNKKRLKTILEPYHNQAAHVEITIPPFGVSILRPVKTRKGSKKQDGSKTKVRSNVTSRGKR.

Catalysis depends on aspartate 309, which acts as the Nucleophile. Residue glutamate 352 is the Proton donor of the active site. A disordered region spans residues 619-645; sequence VKTRKGSKKQDGSKTKVRSNVTSRGKR. Positions 636-645 are enriched in polar residues; sequence RSNVTSRGKR.

It belongs to the glycosyl hydrolase 13 family. GlgB subfamily. As to quaternary structure, monomer.

The catalysed reaction is Transfers a segment of a (1-&gt;4)-alpha-D-glucan chain to a primary hydroxy group in a similar glucan chain.. It functions in the pathway glycan biosynthesis; glycogen biosynthesis. Its function is as follows. Catalyzes the formation of the alpha-1,6-glucosidic linkages in glycogen by scission of a 1,4-alpha-linked oligosaccharide from growing alpha-1,4-glucan chains and the subsequent attachment of the oligosaccharide to the alpha-1,6 position. The sequence is that of 1,4-alpha-glucan branching enzyme GlgB from Bacillus cereus (strain ATCC 14579 / DSM 31 / CCUG 7414 / JCM 2152 / NBRC 15305 / NCIMB 9373 / NCTC 2599 / NRRL B-3711).